The primary structure comprises 335 residues: Pro-cathepsin H (335 aa).

Residues 1 to 22 (MWAVLSLLCAGAWLLGPPACGA) form the signal peptide. Residues 23-97 (SNLAVSSFEK…DEIRHKYLWS (75 aa)) constitute a propeptide that is removed on maturation. Residues asparagine 72 and asparagine 101 are each glycosylated (N-linked (GlcNAc...) asparagine). 4 disulfide bridges follow: cysteine 102–cysteine 327, cysteine 138–cysteine 181, cysteine 172–cysteine 214, and cysteine 272–cysteine 322. Residues 107–115 (GNYLRGTGP) constitute a propeptide that is removed on maturation. The active site involves cysteine 141. The N-linked (GlcNAc...) asparagine glycan is linked to asparagine 230. Active-site residues include histidine 281 and asparagine 301.

It belongs to the peptidase C1 family. As to quaternary structure, composed of cathepsin H and mini chain; disulfide-linked. Cathepsin H may be split into heavy and light chain. All chains are held together by disulfide bonds.

It localises to the lysosome. It carries out the reaction Hydrolysis of proteins, acting as an aminopeptidase (notably, cleaving Arg-|-Xaa bonds) as well as an endopeptidase.. Functionally, important for the overall degradation of proteins in lysosomes. This Sus scrofa (Pig) protein is Pro-cathepsin H (CTSH).